Reading from the N-terminus, the 313-residue chain is DNA-directed RNA polymerase subunit alpha (313 aa).

The segment at 1-227 (MMLDVAPPRF…DFFGLFAEGY (227 aa)) is alpha N-terminal domain (alpha-NTD). The interval 242 to 313 (RPVITDERPI…YGYTLESGRE (72 aa)) is alpha C-terminal domain (alpha-CTD).

Belongs to the RNA polymerase alpha chain family. Homodimer. The RNAP catalytic core consists of 2 alpha, 1 beta, 1 beta' and 1 omega subunit. When a sigma factor is associated with the core the holoenzyme is formed, which can initiate transcription.

It catalyses the reaction RNA(n) + a ribonucleoside 5'-triphosphate = RNA(n+1) + diphosphate. Functionally, DNA-dependent RNA polymerase catalyzes the transcription of DNA into RNA using the four ribonucleoside triphosphates as substrates. In Rubrobacter xylanophilus (strain DSM 9941 / JCM 11954 / NBRC 16129 / PRD-1), this protein is DNA-directed RNA polymerase subunit alpha.